We begin with the raw amino-acid sequence, 854 residues long: DNA mismatch repair protein MutS (854 aa).

615–622 (GPNMGGKS) serves as a coordination point for ATP.

It belongs to the DNA mismatch repair MutS family.

Its function is as follows. This protein is involved in the repair of mismatches in DNA. It is possible that it carries out the mismatch recognition step. This protein has a weak ATPase activity. This Aliivibrio fischeri (strain MJ11) (Vibrio fischeri) protein is DNA mismatch repair protein MutS.